The sequence spans 374 residues: Transcription termination factor 1, mitochondrial (374 aa).

The N-terminal 37 residues, 1–37 (MASRNIWRVRRNFLFDLRGWVPQYSAEVFLKSIPFRP), are a transit peptide targeting the mitochondrion. Interaction with DNA stretches follow at residues 146–147 (RS), 224–228 (QSTKR), 301–308 (SEKKFNDK), 332–335 (SIHT), and 361–368 (SQRRYEAK).

The protein belongs to the mTERF family. In terms of assembly, monomer. In terms of processing, is a phosphoprotein. While the DNA-binding activity is unaffected by the phosphorylation/dephosphorylation state, only the phosphorylated form of the protein is active for termination activity. Functioning seems to be regulated by phosphorylation.

It localises to the mitochondrion. Transcription termination factor. Binds to a 28 bp region within the tRNA(Leu(uur)) gene at a position immediately adjacent to and downstream of the 16S rRNA gene; this region comprises a tridecamer sequence critical for directing accurate termination. Binds DNA along the major grove and promotes DNA bending and partial unwinding. Promotes base flipping. Transcription termination activity appears to be polarized with highest specificity for transcripts initiated on the light strand. This is Transcription termination factor 1, mitochondrial (Mterf1) from Rattus norvegicus (Rat).